The following is a 66-amino-acid chain: Large ribosomal subunit protein bL33c (66 aa).

Belongs to the bacterial ribosomal protein bL33 family.

Its subcellular location is the plastid. It localises to the chloroplast. This chain is Large ribosomal subunit protein bL33c, found in Carica papaya (Papaya).